The following is an 82-amino-acid chain: Conotoxin Gla-TxX (82 aa).

The N-terminal stretch at Met1–Cys25 is a signal peptide. 4-carboxyglutamate is present on residues Glu30, Glu34, Glu37, Glu40, and Glu41. Asn72 carries the asparagine amide modification. Residues Leu77–Lys82 constitute a propeptide that is removed on maturation.

Contains 4 disulfide bonds. In terms of tissue distribution, expressed by the venom duct.

It localises to the secreted. In Conus textile (Cloth-of-gold cone), this protein is Conotoxin Gla-TxX.